The chain runs to 462 residues: Argininosuccinate lyase (462 aa).

It belongs to the lyase 1 family. Argininosuccinate lyase subfamily.

It localises to the cytoplasm. The enzyme catalyses 2-(N(omega)-L-arginino)succinate = fumarate + L-arginine. It participates in amino-acid biosynthesis; L-arginine biosynthesis; L-arginine from L-ornithine and carbamoyl phosphate: step 3/3. The sequence is that of Argininosuccinate lyase from Ehrlichia ruminantium (strain Welgevonden).